The primary structure comprises 95 residues: Aspartyl/glutamyl-tRNA(Asn/Gln) amidotransferase subunit C (95 aa).

The protein belongs to the GatC family. Heterotrimer of A, B and C subunits.

The enzyme catalyses L-glutamyl-tRNA(Gln) + L-glutamine + ATP + H2O = L-glutaminyl-tRNA(Gln) + L-glutamate + ADP + phosphate + H(+). It carries out the reaction L-aspartyl-tRNA(Asn) + L-glutamine + ATP + H2O = L-asparaginyl-tRNA(Asn) + L-glutamate + ADP + phosphate + 2 H(+). Functionally, allows the formation of correctly charged Asn-tRNA(Asn) or Gln-tRNA(Gln) through the transamidation of misacylated Asp-tRNA(Asn) or Glu-tRNA(Gln) in organisms which lack either or both of asparaginyl-tRNA or glutaminyl-tRNA synthetases. The reaction takes place in the presence of glutamine and ATP through an activated phospho-Asp-tRNA(Asn) or phospho-Glu-tRNA(Gln). This chain is Aspartyl/glutamyl-tRNA(Asn/Gln) amidotransferase subunit C, found in Anaeromyxobacter sp. (strain Fw109-5).